We begin with the raw amino-acid sequence, 315 residues long: Malate dehydrogenase (315 aa).

Position 9–15 (9–15 (GGSGNVG)) interacts with NAD(+). Substrate-binding residues include Arg84 and Arg90. Residues Asn97 and 120–122 (VSN) contribute to the NAD(+) site. Substrate-binding residues include Asn122 and Arg153. The active-site Proton acceptor is His177.

Belongs to the LDH/MDH superfamily.

The enzyme catalyses (S)-malate + NAD(+) = oxaloacetate + NADH + H(+). In terms of biological role, catalyzes the reversible oxidation of malate to oxaloacetate. The protein is Malate dehydrogenase of Helicobacter hepaticus (strain ATCC 51449 / 3B1).